The following is a 427-amino-acid chain: Serine--tRNA ligase (427 aa).

235 to 237 is a binding site for L-serine; it reads TAE. ATP is bound by residues 266-268 and V282; that span reads RRE. E289 serves as a coordination point for L-serine. Residue 353–356 participates in ATP binding; that stretch reads EASS. Position 389 (S389) interacts with L-serine.

The protein belongs to the class-II aminoacyl-tRNA synthetase family. Type-1 seryl-tRNA synthetase subfamily. In terms of assembly, homodimer. The tRNA molecule binds across the dimer.

Its subcellular location is the cytoplasm. It carries out the reaction tRNA(Ser) + L-serine + ATP = L-seryl-tRNA(Ser) + AMP + diphosphate + H(+). The enzyme catalyses tRNA(Sec) + L-serine + ATP = L-seryl-tRNA(Sec) + AMP + diphosphate + H(+). Its pathway is aminoacyl-tRNA biosynthesis; selenocysteinyl-tRNA(Sec) biosynthesis; L-seryl-tRNA(Sec) from L-serine and tRNA(Sec): step 1/1. In terms of biological role, catalyzes the attachment of serine to tRNA(Ser). Is also able to aminoacylate tRNA(Sec) with serine, to form the misacylated tRNA L-seryl-tRNA(Sec), which will be further converted into selenocysteinyl-tRNA(Sec). The sequence is that of Serine--tRNA ligase from Chlorobium phaeobacteroides (strain BS1).